The primary structure comprises 478 residues: Glutamyl-tRNA(Gln) amidotransferase subunit A (478 aa).

Active-site charge relay system residues include K72 and S147. Residue S171 is the Acyl-ester intermediate of the active site.

It belongs to the amidase family. GatA subfamily. Heterotrimer of A, B and C subunits.

The catalysed reaction is L-glutamyl-tRNA(Gln) + L-glutamine + ATP + H2O = L-glutaminyl-tRNA(Gln) + L-glutamate + ADP + phosphate + H(+). Its function is as follows. Allows the formation of correctly charged Gln-tRNA(Gln) through the transamidation of misacylated Glu-tRNA(Gln) in organisms which lack glutaminyl-tRNA synthetase. The reaction takes place in the presence of glutamine and ATP through an activated gamma-phospho-Glu-tRNA(Gln). The chain is Glutamyl-tRNA(Gln) amidotransferase subunit A from Saccharolobus solfataricus (strain ATCC 35092 / DSM 1617 / JCM 11322 / P2) (Sulfolobus solfataricus).